Reading from the N-terminus, the 349-residue chain is Pinopsin (349 aa).

Residues 1 to 16 (MDPTNSPQEPPHTSTP) are compositionally biased toward polar residues. The disordered stretch occupies residues 1–22 (MDPTNSPQEPPHTSTPGPFDGP). Over 1–32 (MDPTNSPQEPPHTSTPGPFDGPQWPHQAPRGM) the chain is Extracellular. The helical transmembrane segment at 33-57 (YLSVAVLMGIVVISASVVNGLVIVV) threads the bilayer. Residues 58–69 (SIRYKKLRSPLN) lie on the Cytoplasmic side of the membrane. The helical transmembrane segment at 70-94 (YILVNLAMADLLVTLCGSSVSFSNN) threads the bilayer. The Extracellular portion of the chain corresponds to 95–109 (INGFFVFGKRLCELE). Residues Cys106 and Cys183 are joined by a disulfide bond. A helical membrane pass occupies residues 110 to 129 (GFMVSLTGIVGLWSLAILAL). Over 130–148 (ERYVVVCRPLGDFRFQHRH) the chain is Cytoplasmic. The chain crosses the membrane as a helical span at residues 149–172 (AVTGCAFTWVWSLLWTTPPLLGWS). Over 173 to 196 (SYVPEGLRTSCGPNWYTGGSNNNS) the chain is Extracellular. A glycan (N-linked (GlcNAc...) asparagine) is linked at Asn194. Residues 197–224 (YILTLFVTCFVMPLSLILFSYANLLMTL) traverse the membrane as a helical segment. Residues 225–246 (RAAAAQQQESDTTQQAERQVTR) are Cytoplasmic-facing. A helical membrane pass occupies residues 247–270 (MVVAMVMAFLICWLPYTTFALVVA). At 271–278 (TNKDIAIQ) the chain is on the extracellular side. The helical transmembrane segment at 279–303 (PALASLPSYFSKTATVYNPIIYVFM) threads the bilayer. Residue Lys290 is modified to N6-(retinylidene)lysine. Topologically, residues 304–349 (NKQFQSCLLKMLCCGHHPRGTGRTAPAAPASPTDGLRNKVTPSHPV) are cytoplasmic. S-palmitoyl cysteine attachment occurs at residues Cys316 and Cys317. The disordered stretch occupies residues 325–349 (GRTAPAAPASPTDGLRNKVTPSHPV).

This sequence belongs to the G-protein coupled receptor 1 family. Opsin subfamily. Post-translationally, phosphorylated on some or all of the serine and threonine residues present in the C-terminal region. As to expression, pineal gland.

The protein localises to the membrane. Functionally, produces a slow and prolonged phototransduction response consistent with the non-visual function of pineal photoreception. This is Pinopsin from Columba livia (Rock dove).